The chain runs to 44 residues: Cytochrome b559 subunit beta (44 aa).

Residues 19-35 form a helical membrane-spanning segment; sequence WLAIHGLAIPTVFFLGA. Histidine 23 contacts heme.

The protein belongs to the PsbE/PsbF family. As to quaternary structure, heterodimer of an alpha subunit and a beta subunit. PSII is composed of 1 copy each of membrane proteins PsbA, PsbB, PsbC, PsbD, PsbE, PsbF, PsbH, PsbI, PsbJ, PsbK, PsbL, PsbM, PsbT, PsbX, PsbY, PsbZ, Psb30/Ycf12, at least 3 peripheral proteins of the oxygen-evolving complex and a large number of cofactors. It forms dimeric complexes. Heme b is required as a cofactor.

The protein resides in the plastid. The protein localises to the chloroplast thylakoid membrane. In terms of biological role, this b-type cytochrome is tightly associated with the reaction center of photosystem II (PSII). PSII is a light-driven water:plastoquinone oxidoreductase that uses light energy to abstract electrons from H(2)O, generating O(2) and a proton gradient subsequently used for ATP formation. It consists of a core antenna complex that captures photons, and an electron transfer chain that converts photonic excitation into a charge separation. This chain is Cytochrome b559 subunit beta, found in Porphyra purpurea (Red seaweed).